The primary structure comprises 405 residues: Nicotinate phosphoribosyltransferase (405 aa).

H230 carries the post-translational modification Phosphohistidine; by autocatalysis.

This sequence belongs to the NAPRTase family. In terms of processing, transiently phosphorylated on a His residue during the reaction cycle. Phosphorylation strongly increases the affinity for substrates and increases the rate of nicotinate D-ribonucleotide production. Dephosphorylation regenerates the low-affinity form of the enzyme, leading to product release.

The catalysed reaction is nicotinate + 5-phospho-alpha-D-ribose 1-diphosphate + ATP + H2O = nicotinate beta-D-ribonucleotide + ADP + phosphate + diphosphate. It functions in the pathway cofactor biosynthesis; NAD(+) biosynthesis; nicotinate D-ribonucleotide from nicotinate: step 1/1. Functionally, catalyzes the synthesis of beta-nicotinate D-ribonucleotide from nicotinate and 5-phospho-D-ribose 1-phosphate at the expense of ATP. This chain is Nicotinate phosphoribosyltransferase, found in Bordetella pertussis (strain Tohama I / ATCC BAA-589 / NCTC 13251).